A 318-amino-acid polypeptide reads, in one-letter code: Homeobox-leucine zipper protein ATHB-4 (318 aa).

2 disordered regions span residues 1–23 (MGERDDGLGLSLSLGNSQQKEPS) and 128–165 (ARGGDENEAERASCSRGGGSGGSDDEDGGNGDGSRKKL). Positions 8–17 (LGLSLSLGNS) are enriched in low complexity. The span at 128 to 140 (ARGGDENEAERAS) shows a compositional bias: basic and acidic residues. The segment at residues 160 to 219 (GSRKKLRLSKDQALVLEETFKEHSTLNPKQKLALAKQLNLRARQVEVWFQNRRARTKLKQ) is a DNA-binding region (homeobox). A leucine-zipper region spans residues 227–248 (LKRCCDNLTEENRRLQKEVSEL).

This sequence belongs to the HD-ZIP homeobox family. Class II subfamily.

Its subcellular location is the nucleus. Functionally, probable transcription factor. The polypeptide is Homeobox-leucine zipper protein ATHB-4 (ATHB-4) (Arabidopsis thaliana (Mouse-ear cress)).